Here is a 112-residue protein sequence, read N- to C-terminus: DNA-binding protein Memar_1972 (112 aa).

A disordered region spans residues 14-35 (MEQMQRQAMDQQGMEEEAARQQ).

The protein belongs to the PDCD5 family.

The sequence is that of DNA-binding protein Memar_1972 from Methanoculleus marisnigri (strain ATCC 35101 / DSM 1498 / JR1).